Consider the following 975-residue polypeptide: MKLEHPDRLMNRTPLSLAALETHDAFAERHIGPDAASQQAMLDTLGFASRAALIDAVIPASIRRAETLPLGPFAQPKSEAEALAALRALADKNQVFRSYIGQGYHDTHTPAVILRNVLENPAWYTAYTPYQPEISQGRLEALLNFQQMVADLTGLAISNASLLDEATAAAEAMTLLQRTGKPASNVFYVADDVLPQTLEVIRTRALPIGIEVKTGPAADAAQANAFGVLLQYPGVNGDVRDYRALTEAIHAAGGHVVVAADLLALTVLTPPGEWGADVAVGNTQRFGVPMGFGGPHAAYLAVRDEFKRQMPGRLVGVTVDAQGKPALRLALQTREQHIRREKATSNVCTAQALLAIMASMYAVYHGPHGLKTIALRVNRIAALFAAGVKQLGFATVNDTFFDTLTIDTGARTAQVHEFAKARRINLRRVSATQVGVSFDETTTRDDLAALLAVFAQAAGGTAPSVDALDAGAAGVAALPAGLERTSAYLTHHVFNRHHSETEMLRYLRSLSDKDLALDRSMIPLGSCTMKLNATSEMLPVTWPEFGRIHPFAPAEQTVGYREMIDQLEQMLVAATGYAAVSLQPNAGSQGEYAGLLIIHAYHASRGEAHRDVCLIPASAHGTNPASAHMAGMKVVVVACDAQGNVDIADLKAKAEQHANDLAAIMITYPSTHGVFEQNVREICEIVHAHGGQVYVDGANMNAMVGLTAPGQFGGDVSHLNLHKTFCIPHGGGGPGVGPVAVGAHLAKFLPNQRSTGYTREEDGIGAVSAAPYGSASILPISWMYIAMMGAKNLTAATETAILNANYIAKRLAPHYPVLYSGPGGLVAHECILDLRPIKETSGISVDDVAKRLMDYGFHAPTMSFPVPGTLMVEPTESESQEELDRFIAAMIAIREEIRAVEEGRADREDNPLRHAPHTAAVVTANEWPHAYSREQAAYPVASLGTNKYWPPVGRADNAYGDRNLFCSCVPMSDYA.

N6-(pyridoxal phosphate)lysine is present on K723.

Belongs to the GcvP family. The glycine cleavage system is composed of four proteins: P, T, L and H. Requires pyridoxal 5'-phosphate as cofactor.

It carries out the reaction N(6)-[(R)-lipoyl]-L-lysyl-[glycine-cleavage complex H protein] + glycine + H(+) = N(6)-[(R)-S(8)-aminomethyldihydrolipoyl]-L-lysyl-[glycine-cleavage complex H protein] + CO2. The glycine cleavage system catalyzes the degradation of glycine. The P protein binds the alpha-amino group of glycine through its pyridoxal phosphate cofactor; CO(2) is released and the remaining methylamine moiety is then transferred to the lipoamide cofactor of the H protein. This chain is Glycine dehydrogenase (decarboxylating), found in Burkholderia ambifaria (strain MC40-6).